Reading from the N-terminus, the 121-residue chain is Heme-degrading monooxygenase (121 aa).

The region spanning 2–101 (IIVTNTIKVE…EQREDRKGIV (100 aa)) is the ABM domain. Position 6 (Asn-6) interacts with Fe cation. Residues 76–98 (KSDSFKKAHGRTKDTREQREDRK) are disordered. A compositionally biased stretch (basic and acidic residues) spans 78–98 (DSFKKAHGRTKDTREQREDRK). His-84 is a heme binding site.

Belongs to the antibiotic biosynthesis monooxygenase family. Heme-degrading monooxygenase IsdG subfamily. As to quaternary structure, homodimer.

It localises to the cytoplasm. The enzyme catalyses heme b + 3 reduced [NADPH--hemoprotein reductase] + 3 O2 = biliverdin IXalpha + CO + Fe(2+) + 3 oxidized [NADPH--hemoprotein reductase] + 3 H2O + H(+). Allows bacterial pathogens to use the host heme as an iron source. Catalyzes the oxidative degradation of the heme macrocyclic porphyrin ring to the biliverdin in the presence of a suitable electron donor such as ascorbate or NADPH--cytochrome P450 reductase, with subsequent release of free iron. This chain is Heme-degrading monooxygenase, found in Listeria innocua serovar 6a (strain ATCC BAA-680 / CLIP 11262).